A 120-amino-acid chain; its full sequence is uncharacterized protein (120 aa).

The chain crosses the membrane as a helical span at residues 93 to 109 (LCVGISTTMIIQVLFLL).

It localises to the membrane. This is an uncharacterized protein from Saccharomyces cerevisiae (strain ATCC 204508 / S288c) (Baker's yeast).